The following is a 161-amino-acid chain: Transcriptional repressor NrdR (161 aa).

A compositionally biased stretch (basic residues) spans 1 to 11 (MQCPHCQHHNS). The interval 1 to 21 (MQCPHCQHHNSRVLESRSSEG) is disordered. Residues 3–34 (CPHCQHHNSRVLESRSSEGGQSIRRRRECLEC) fold into a zinc finger. Residues 49-139 (VTVIKQDGER…VYGRFQGIAD (91 aa)) enclose the ATP-cone domain.

The protein belongs to the NrdR family. It depends on Zn(2+) as a cofactor.

In terms of biological role, negatively regulates transcription of bacterial ribonucleotide reductase nrd genes and operons by binding to NrdR-boxes. In Synechocystis sp. (strain ATCC 27184 / PCC 6803 / Kazusa), this protein is Transcriptional repressor NrdR.